The primary structure comprises 224 residues: tRNA (guanine-N(7)-)-methyltransferase (224 aa).

S-adenosyl-L-methionine contacts are provided by Glu52, Asp77, and Asp126. Residue Asp126 is part of the active site. Residues Lys130 and Asp162 each contribute to the substrate site.

Belongs to the class I-like SAM-binding methyltransferase superfamily. TrmB family.

The catalysed reaction is guanosine(46) in tRNA + S-adenosyl-L-methionine = N(7)-methylguanosine(46) in tRNA + S-adenosyl-L-homocysteine. The protein operates within tRNA modification; N(7)-methylguanine-tRNA biosynthesis. In terms of biological role, catalyzes the formation of N(7)-methylguanine at position 46 (m7G46) in tRNA. In Christiangramia forsetii (strain DSM 17595 / CGMCC 1.15422 / KT0803) (Gramella forsetii), this protein is tRNA (guanine-N(7)-)-methyltransferase.